The primary structure comprises 397 residues: Homocitrate synthase AksA (397 aa).

In terms of domain architecture, Pyruvate carboxyltransferase spans 19 to 270 (VIVYDTTLRD…DPGFNTEVLA (252 aa)).

It belongs to the alpha-IPM synthase/homocitrate synthase family.

It catalyses the reaction acetyl-CoA + 2-oxoglutarate + H2O = (2R)-homocitrate + CoA + H(+). The catalysed reaction is 2-oxoadipate + acetyl-CoA + H2O = (R)-dihomocitrate + CoA + H(+). It carries out the reaction 2-oxoheptanedioate + acetyl-CoA + H2O = (R)-trihomocitrate + CoA + H(+). Its pathway is organic acid metabolism; 2-oxosuberate biosynthesis. Catalyzes the condensation of alpha-ketoglutarate and acetyl-CoA to form (R)-homocitrate. Can also catalyze the condensation of alpha-ketoadipate with acetyl-CoA to form (R)-homo(2)citrate, and the condensation of alpha-ketopimelate with acetyl-CoA to form (R)-homo(3)citrate. These reactions are part of the biosynthesis pathway of coenzyme B and biotin. The protein is Homocitrate synthase AksA (aksA) of Methanopyrus kandleri (strain AV19 / DSM 6324 / JCM 9639 / NBRC 100938).